The following is a 467-amino-acid chain: UDP-N-acetylmuramate--L-alanine ligase (467 aa).

114-120 (GTHGKTT) contributes to the ATP binding site.

Belongs to the MurCDEF family.

Its subcellular location is the cytoplasm. The catalysed reaction is UDP-N-acetyl-alpha-D-muramate + L-alanine + ATP = UDP-N-acetyl-alpha-D-muramoyl-L-alanine + ADP + phosphate + H(+). Its pathway is cell wall biogenesis; peptidoglycan biosynthesis. In terms of biological role, cell wall formation. The sequence is that of UDP-N-acetylmuramate--L-alanine ligase from Rhodopseudomonas palustris (strain ATCC BAA-98 / CGA009).